The following is a 381-amino-acid chain: Homoserine O-succinyltransferase (381 aa).

Positions 45 to 360 (NAVLVCHALN…PHGHDAFLLD (316 aa)) constitute an AB hydrolase-1 domain. Residue Ser-151 is the Nucleophile of the active site. Position 221 (Arg-221) interacts with substrate. Residues Asp-321 and His-354 contribute to the active site. Asp-355 provides a ligand contact to substrate.

It belongs to the AB hydrolase superfamily. MetX family. In terms of assembly, homodimer.

The protein localises to the cytoplasm. It catalyses the reaction L-homoserine + succinyl-CoA = O-succinyl-L-homoserine + CoA. It participates in amino-acid biosynthesis; L-methionine biosynthesis via de novo pathway; O-succinyl-L-homoserine from L-homoserine: step 1/1. Its function is as follows. Transfers a succinyl group from succinyl-CoA to L-homoserine, forming succinyl-L-homoserine. The chain is Homoserine O-succinyltransferase from Burkholderia cenocepacia (strain HI2424).